A 430-amino-acid chain; its full sequence is Glutamate-1-semialdehyde 2,1-aminomutase (430 aa).

Lysine 267 is subject to N6-(pyridoxal phosphate)lysine.

This sequence belongs to the class-III pyridoxal-phosphate-dependent aminotransferase family. HemL subfamily. In terms of assembly, homodimer. Requires pyridoxal 5'-phosphate as cofactor.

The protein resides in the cytoplasm. The enzyme catalyses (S)-4-amino-5-oxopentanoate = 5-aminolevulinate. The protein operates within porphyrin-containing compound metabolism; protoporphyrin-IX biosynthesis; 5-aminolevulinate from L-glutamyl-tRNA(Glu): step 2/2. This Anaeromyxobacter dehalogenans (strain 2CP-C) protein is Glutamate-1-semialdehyde 2,1-aminomutase.